The primary structure comprises 140 residues: Large ribosomal subunit protein uL14 (140 aa).

Belongs to the universal ribosomal protein uL14 family. Part of the 50S ribosomal subunit. Forms a cluster with proteins L3 and L24e, part of which may contact the 16S rRNA in 2 intersubunit bridges.

Its function is as follows. Binds to 23S rRNA. Forms part of two intersubunit bridges in the 70S ribosome. In Aeropyrum pernix (strain ATCC 700893 / DSM 11879 / JCM 9820 / NBRC 100138 / K1), this protein is Large ribosomal subunit protein uL14.